Consider the following 375-residue polypeptide: 23S rRNA (uracil(747)-C(5))-methyltransferase RlmC (375 aa).

The [4Fe-4S] cluster site is built by Cys-3, Cys-11, Cys-14, and Cys-87. S-adenosyl-L-methionine-binding residues include Gln-212, Phe-241, Glu-262, and Asn-307. The active-site Nucleophile is the Cys-334.

The protein belongs to the class I-like SAM-binding methyltransferase superfamily. RNA M5U methyltransferase family. RlmC subfamily.

It catalyses the reaction uridine(747) in 23S rRNA + S-adenosyl-L-methionine = 5-methyluridine(747) in 23S rRNA + S-adenosyl-L-homocysteine + H(+). Functionally, catalyzes the formation of 5-methyl-uridine at position 747 (m5U747) in 23S rRNA. In Shigella flexneri serotype 5b (strain 8401), this protein is 23S rRNA (uracil(747)-C(5))-methyltransferase RlmC.